Consider the following 281-residue polypeptide: Protein-S-isoprenylcysteine O-methyltransferase (281 aa).

Residues 1–2 (ML) lie on the Cytoplasmic side of the membrane. A helical transmembrane segment spans residues 3–29 (SPAGKISLQSFTGSSLVFFVICMFNHY). At 30-35 (YGITNL) the chain is on the lumenal side. A helical membrane pass occupies residues 36-53 (VVNTLIVFFYAVNVYFFL). The Cytoplasmic portion of the chain corresponds to 54-58 (KFFYN). A helical transmembrane segment spans residues 59–85 (EFAFAIAIRAAFLGLVLVLGLYIKLVA). Topologically, residues 86 to 88 (PPN) are lumenal. The chain crosses the membrane as a helical span at residues 89-113 (IQIFGGYMSVMALFHYSEFLAIAIV). Residues 114-118 (QPKQV) are Cytoplasmic-facing. The chain crosses the membrane as a helical span at residues 119-149 (STDSFVINHSPQYTIAAVSSWVEFFIETYFF). The Lumenal segment spans residues 150–155 (PGLKEI). Residues 156 to 181 (HWLSNIGLCVCILGEVLRKTAILTAG) traverse the membrane as a helical segment. Over 182 to 208 (SNFNHLVQCEKSSDHVLVTHGVYAWFR) the chain is Cytoplasmic. Residues glutamine 189, 196-199 (HVLV), tyrosine 204, and 209-212 (HPSY) contribute to the S-adenosyl-L-methionine site. Residues 209–226 (HPSYVGWFYWSIGTQIIL) traverse the membrane as a helical segment. The Lumenal portion of the chain corresponds to 227-229 (INP). The chain crosses the membrane as a helical span at residues 230–243 (LCIPAYTLASWMFF). At 244–281 (KERIYIEESMLLSFFGQQYCDYQQQVGTGIPFIEGYKI) the chain is on the cytoplasmic side. Residue arginine 246 participates in substrate binding. Residue glutamate 250 coordinates S-adenosyl-L-methionine.

Belongs to the class VI-like SAM-binding methyltransferase superfamily. Isoprenylcysteine carboxyl methyltransferase family.

The protein resides in the endoplasmic reticulum membrane. It catalyses the reaction [protein]-C-terminal S-[(2E,6E)-farnesyl]-L-cysteine + S-adenosyl-L-methionine = [protein]-C-terminal S-[(2E,6E)-farnesyl]-L-cysteine methyl ester + S-adenosyl-L-homocysteine. Functionally, catalyzes the post-translational methylation of isoprenylated C-terminal cysteine residues. This Tribolium castaneum (Red flour beetle) protein is Protein-S-isoprenylcysteine O-methyltransferase.